The chain runs to 559 residues: DNA ligase (559 aa).

An ATP-binding site is contributed by E247. K249 serves as the catalytic N6-AMP-lysine intermediate. Positions 254, 269, 299, 339, 414, and 420 each coordinate ATP.

It belongs to the ATP-dependent DNA ligase family. Mg(2+) is required as a cofactor.

The catalysed reaction is ATP + (deoxyribonucleotide)n-3'-hydroxyl + 5'-phospho-(deoxyribonucleotide)m = (deoxyribonucleotide)n+m + AMP + diphosphate.. Its function is as follows. DNA ligase that seals nicks in double-stranded DNA during DNA replication, DNA recombination and DNA repair. The chain is DNA ligase from Pyrococcus abyssi (strain GE5 / Orsay).